The primary structure comprises 274 residues: Urease accessory protein UreD (274 aa).

This sequence belongs to the UreD family. UreD, UreF and UreG form a complex that acts as a GTP-hydrolysis-dependent molecular chaperone, activating the urease apoprotein by helping to assemble the nickel containing metallocenter of UreC. The UreE protein probably delivers the nickel.

Its subcellular location is the cytoplasm. Required for maturation of urease via the functional incorporation of the urease nickel metallocenter. The polypeptide is Urease accessory protein UreD (Lachnoclostridium phytofermentans (strain ATCC 700394 / DSM 18823 / ISDg) (Clostridium phytofermentans)).